The chain runs to 243 residues: Pyridoxine 5'-phosphate synthase (243 aa).

N9 is a binding site for 3-amino-2-oxopropyl phosphate. Position 11–12 (11–12) interacts with 1-deoxy-D-xylulose 5-phosphate; it reads DH. R20 contacts 3-amino-2-oxopropyl phosphate. H45 serves as the catalytic Proton acceptor. 1-deoxy-D-xylulose 5-phosphate is bound by residues R47 and H52. Residue E72 is the Proton acceptor of the active site. Residue T102 participates in 1-deoxy-D-xylulose 5-phosphate binding. Catalysis depends on H193, which acts as the Proton donor. 3-amino-2-oxopropyl phosphate-binding positions include G194 and 215 to 216; that span reads GH.

It belongs to the PNP synthase family. In terms of assembly, homooctamer; tetramer of dimers.

The protein resides in the cytoplasm. The catalysed reaction is 3-amino-2-oxopropyl phosphate + 1-deoxy-D-xylulose 5-phosphate = pyridoxine 5'-phosphate + phosphate + 2 H2O + H(+). The protein operates within cofactor biosynthesis; pyridoxine 5'-phosphate biosynthesis; pyridoxine 5'-phosphate from D-erythrose 4-phosphate: step 5/5. Its function is as follows. Catalyzes the complicated ring closure reaction between the two acyclic compounds 1-deoxy-D-xylulose-5-phosphate (DXP) and 3-amino-2-oxopropyl phosphate (1-amino-acetone-3-phosphate or AAP) to form pyridoxine 5'-phosphate (PNP) and inorganic phosphate. The protein is Pyridoxine 5'-phosphate synthase of Pectobacterium atrosepticum (strain SCRI 1043 / ATCC BAA-672) (Erwinia carotovora subsp. atroseptica).